The following is a 167-amino-acid chain: MFLAIIKFQNYGQQVLEAANYIGQGFAVTLDHLNRLPITVQYPYEKKLPSERFRGRIHFEFDKCIACEVCVRVCPINLPVVDWIFLKDVKKKKLKNYSIDFGVCIFCGNCVEYCPTNCLSMTEEYELSSYNRHELNFDQTALGRLPPPASEDVSIQLVLNSRNSFRR.

2 4Fe-4S ferredoxin-type domains span residues 55-84 and 95-124; these read GRIH…VDWI and KNYS…MTEE. Residues cysteine 64, cysteine 67, cysteine 70, cysteine 74, cysteine 104, cysteine 107, cysteine 110, and cysteine 114 each coordinate [4Fe-4S] cluster.

It belongs to the complex I 23 kDa subunit family. In terms of assembly, NDH is composed of at least 16 different subunits, 5 of which are encoded in the nucleus. [4Fe-4S] cluster serves as cofactor.

The protein localises to the plastid. It localises to the chloroplast thylakoid membrane. The catalysed reaction is a plastoquinone + NADH + (n+1) H(+)(in) = a plastoquinol + NAD(+) + n H(+)(out). The enzyme catalyses a plastoquinone + NADPH + (n+1) H(+)(in) = a plastoquinol + NADP(+) + n H(+)(out). NDH shuttles electrons from NAD(P)H:plastoquinone, via FMN and iron-sulfur (Fe-S) centers, to quinones in the photosynthetic chain and possibly in a chloroplast respiratory chain. The immediate electron acceptor for the enzyme in this species is believed to be plastoquinone. Couples the redox reaction to proton translocation, and thus conserves the redox energy in a proton gradient. In Adiantum capillus-veneris (Maidenhair fern), this protein is NAD(P)H-quinone oxidoreductase subunit I, chloroplastic.